The following is a 510-amino-acid chain: Polyadenylation factor subunit 2 (510 aa).

6 WD repeats span residues 26 to 65, 91 to 130, 133 to 172, 175 to 215, 218 to 258, and 288 to 327; these read KSKK…FETV, AHHD…ADTV, GHNW…CLTT, SHKN…DICI, GHEK…LPSG, and AHSA…ETSY.

The protein resides in the nucleus. Required for 3'-end cleavage and polyadenylation of pre-mRNAs. Also involved in chromosome segregation where it has a role in chromosome attachment to the mitotic spindle. This chain is Polyadenylation factor subunit 2 (pfs2), found in Aspergillus fumigatus (strain ATCC MYA-4609 / CBS 101355 / FGSC A1100 / Af293) (Neosartorya fumigata).